Here is a 403-residue protein sequence, read N- to C-terminus: Phosphoglycerate kinase (403 aa).

Substrate-binding positions include 21–23 (DFN), arginine 36, 59–62 (HLGR), arginine 119, and arginine 154. Residues lysine 207, glycine 299, glutamate 330, and 357–360 (GGDA) contribute to the ATP site.

Belongs to the phosphoglycerate kinase family. As to quaternary structure, monomer.

It localises to the cytoplasm. It carries out the reaction (2R)-3-phosphoglycerate + ATP = (2R)-3-phospho-glyceroyl phosphate + ADP. Its pathway is carbohydrate degradation; glycolysis; pyruvate from D-glyceraldehyde 3-phosphate: step 2/5. The protein is Phosphoglycerate kinase of Chlamydia trachomatis serovar A (strain ATCC VR-571B / DSM 19440 / HAR-13).